The sequence spans 221 residues: Probable hydrogenase maturation factor HypB (221 aa).

The interval A35–V196 is G-domain. Residues C95 and H96 each contribute to the Ni(2+) site. C95, H96, H100, H104, and C127 together coordinate Zn(2+). Residue C127 participates in Ni(2+) binding.

This sequence belongs to the SIMIBI class G3E GTPase family. HypB/HupM subfamily. In terms of assembly, homodimer.

Functionally, involved in the maturation of [NiFe] hydrogenases. Required for nickel insertion into the metal center of the hydrogenase. Exhibits a low intrinsic GTPase activity, which is essential for nickel insertion. This is Probable hydrogenase maturation factor HypB from Methanocaldococcus jannaschii (strain ATCC 43067 / DSM 2661 / JAL-1 / JCM 10045 / NBRC 100440) (Methanococcus jannaschii).